Consider the following 318-residue polypeptide: Cytochrome f (318 aa).

The first 33 residues, 1–33 (MKNTFSWIKKEITRSISLSLMIYIITRTSISNA), serve as a signal peptide directing secretion. Residues Tyr34, Cys54, Cys57, and His58 each contribute to the heme site. Residues 284–304 (VQGLLFFLASVILAQIFLVLK) traverse the membrane as a helical segment.

This sequence belongs to the cytochrome f family. As to quaternary structure, the 4 large subunits of the cytochrome b6-f complex are cytochrome b6, subunit IV (17 kDa polypeptide, petD), cytochrome f and the Rieske protein, while the 4 small subunits are PetG, PetL, PetM and PetN. The complex functions as a dimer. Heme is required as a cofactor.

The protein localises to the plastid. The protein resides in the chloroplast thylakoid membrane. In terms of biological role, component of the cytochrome b6-f complex, which mediates electron transfer between photosystem II (PSII) and photosystem I (PSI), cyclic electron flow around PSI, and state transitions. In Oenothera biennis (German evening primrose), this protein is Cytochrome f.